Here is a 112-residue protein sequence, read N- to C-terminus: UPF0060 membrane protein Mpe_A1656 (112 aa).

4 helical membrane-spanning segments follow: residues 9–29 (GLFF…WLVL), 34–54 (SAWL…LLTL), 65–85 (AYGG…DGVV), and 91–111 (LVGG…PRAA).

Belongs to the UPF0060 family.

The protein resides in the cell inner membrane. This chain is UPF0060 membrane protein Mpe_A1656, found in Methylibium petroleiphilum (strain ATCC BAA-1232 / LMG 22953 / PM1).